The primary structure comprises 203 residues: uncharacterized protein (203 aa).

The 99-residue stretch at 90–188 (EKRQHVRVQP…YENIIGRYVM (99 aa)) folds into the PilZ domain.

It to A.aeolicus aq_820 and aq_1583.

This is an uncharacterized protein from Aquifex aeolicus (strain VF5).